Consider the following 112-residue polypeptide: MGALRGRWAEEEALRFLLGKGYRLLWRNRRTPFGEVDLFMEKDGVYVVVEVKQRASARFGAPLEAITPGKVRRLLQSARFLLGRDDLPVRLEAVLVHGTPKDFRLEHLVLEL.

Belongs to the UPF0102 family.

This Thermus thermophilus (strain ATCC 27634 / DSM 579 / HB8) protein is UPF0102 protein TTHA0372.